A 392-amino-acid polypeptide reads, in one-letter code: MYFKPNFEQFLPKKEDYEKAKKALDYIIPILEKTPHIYDVFVGGSYAKGTWLGRDIDIFVRFPKKYKGQNISIYIEQTLKEHNVPYIKLHGSRDYFQTFYEGLKIEIVPILKLDSPLEREFVTDISQFHVEWVKKNIKGLENDAKYFKIFNKLINTYGAESYLGGLSGYACEILTIHYKGFTNLLKGILKWKPKVFIDIEKHYSNIKEAINELGKDKTASPLILIDPVDKTRNVAASLSYKNFALIIANSYLYLNNNILYKINKSDFETMLEITFRVEETKEDIKNAKISRLTRKIVNYLEKNGIEVYAYTIDFDKNKSYLWVCCEKITIKTKHLGPPAWVNLDKFLEKHNKFFIREDGRLYTIINKTFSVYDIKKVYPEIESIKFLNNNPT.

Residues serine 45 and lysine 48 each coordinate ATP. CTP-binding residues include serine 45 and lysine 48. 3 residues coordinate Mg(2+): aspartate 55, aspartate 57, and glutamate 106. ATP contacts are provided by histidine 129, lysine 148, and tyrosine 157. CTP is bound by residues histidine 129, lysine 148, and tyrosine 157.

It belongs to the tRNA nucleotidyltransferase/poly(A) polymerase family. Archaeal CCA-adding enzyme subfamily. In terms of assembly, homodimer. Mg(2+) is required as a cofactor.

The enzyme catalyses a tRNA precursor + 2 CTP + ATP = a tRNA with a 3' CCA end + 3 diphosphate. It catalyses the reaction a tRNA with a 3' CCA end + 2 CTP + ATP = a tRNA with a 3' CCACCA end + 3 diphosphate. Its function is as follows. Catalyzes the addition and repair of the essential 3'-terminal CCA sequence in tRNAs without using a nucleic acid template. Adds these three nucleotides in the order of C, C, and A to the tRNA nucleotide-73, using CTP and ATP as substrates and producing inorganic pyrophosphate. tRNA 3'-terminal CCA addition is required both for tRNA processing and repair. Also involved in tRNA surveillance by mediating tandem CCA addition to generate a CCACCA at the 3' terminus of unstable tRNAs. While stable tRNAs receive only 3'-terminal CCA, unstable tRNAs are marked with CCACCA and rapidly degraded. In Nanoarchaeum equitans (strain Kin4-M), this protein is CCA-adding enzyme.